The chain runs to 358 residues: Acyl-CoA Delta-12 desaturase (358 aa).

2 consecutive transmembrane segments (helical) span residues 30–50 and 55–75; these read IILYIIMHLTGFYGLYLAMFY and TVFYSWFLLVIALQGVTAGSH. Fe cation contacts are provided by H75, H80, H112, H115, and H116. The Histidine box-1 signature appears at 75–80; sequence HRLWAH. A Histidine box-2 motif is present at residues 112–116; the sequence is HRVHH. Transmembrane regions (helical) follow at residues 175–195 and 200–220; these read TFFAPVIGFYLPAAIPWYFWG and TAFFVATMLRYCACTNITFLV. Fe cation-binding residues include H225, H254, H257, and H258. The Histidine box-3 motif lies at 254 to 258; that stretch reads HNYHH.

This sequence belongs to the fatty acid desaturase type 1 family. Requires Fe(2+) as cofactor.

The protein localises to the membrane. It carries out the reaction (9Z)-octadecenoyl-CoA + 2 Fe(II)-[cytochrome b5] + O2 + 2 H(+) = (9Z,12Z)-octadecadienoyl-CoA + 2 Fe(III)-[cytochrome b5] + 2 H2O. The enzyme catalyses (9Z)-hexadecenoyl-CoA + 2 Fe(II)-[cytochrome b5] + O2 + 2 H(+) = (9Z,12Z)-hexadecadienoyl-CoA + 2 Fe(III)-[cytochrome b5] + 2 H2O. In terms of biological role, catalyzes the formation of a Delta12 double bond, acting on monounsaturated fatty acyl substrates like palmitoleoyl-CoA ((9Z)-hexadecenoyl-CoA) and oleoyl-CoA ((9Z)-octadecenoyl-CoA) with higher desaturation activity on (9Z)-octadecenoyl-CoA than (9Z)-hexadecenoyl-CoA. Requires preexisting cis double bond at the Delta9 position of fatty acyls to be able to insert the Delta12 double bond. Delta12-desaturation of (9Z)-octadecenoyl-CoA in insects produces (9Z,12Z)-octadecadienoyl-CoA (linoleoyl-CoA) which may be used to supply precursors of crucial mediators of immunity and reproduction and other essential functions. This chain is Acyl-CoA Delta-12 desaturase, found in Tribolium castaneum (Red flour beetle).